The primary structure comprises 451 residues: Phosphoglucosamine mutase (451 aa).

Serine 107 serves as the catalytic Phosphoserine intermediate. Mg(2+) contacts are provided by serine 107, aspartate 246, aspartate 248, and aspartate 250. Serine 107 is subject to Phosphoserine.

It belongs to the phosphohexose mutase family. Mg(2+) is required as a cofactor. Post-translationally, activated by phosphorylation.

It catalyses the reaction alpha-D-glucosamine 1-phosphate = D-glucosamine 6-phosphate. In terms of biological role, catalyzes the conversion of glucosamine-6-phosphate to glucosamine-1-phosphate. The protein is Phosphoglucosamine mutase of Burkholderia cenocepacia (strain HI2424).